The chain runs to 436 residues: Eukaryotic peptide chain release factor subunit 1-1 (436 aa).

Belongs to the eukaryotic release factor 1 family. As to quaternary structure, heterodimer of two subunits, one of which binds GTP.

The protein localises to the cytoplasm. Functionally, directs the termination of nascent peptide synthesis (translation) in response to the termination codons UAA, UAG and UGA. Modulates plant growth and development. This Arabidopsis thaliana (Mouse-ear cress) protein is Eukaryotic peptide chain release factor subunit 1-1 (ERF1-1).